Reading from the N-terminus, the 576-residue chain is Low-affinity glucose transporter HXT4 (576 aa).

The disordered stretch occupies residues 1-56; sequence MSEEAAYQEDTAVQNTPADALSPVESDSNSALSTPSNKAERDDMKDFDENHEESNN. Residues 1 to 66 are Cytoplasmic-facing; that stretch reads MSEEAAYQED…YVEIPKKPAS (66 aa). Polar residues predominate over residues 25–37; sequence ESDSNSALSTPSN. Basic and acidic residues predominate over residues 38–54; that stretch reads KAERDDMKDFDENHEES. Lys-45 participates in a covalent cross-link: Glycyl lysine isopeptide (Lys-Gly) (interchain with G-Cter in ubiquitin). Residues 67–87 traverse the membrane as a helical segment; sequence AYVTVSICCLMVAFGGFVFGW. The Extracellular segment spans residues 88–122; sequence DTGTISGFVAQTDFIRRFGMKHHDGTYYLSKVRTG. Residues 123–143 form a helical membrane-spanning segment; the sequence is LIVSIFNIGCAIGGIILAKLG. Residues 144 to 149 lie on the Cytoplasmic side of the membrane; the sequence is DMYGRK. The chain crosses the membrane as a helical span at residues 150–170; that stretch reads MGLIVVVVIYIIGIIIQIASI. Residues 171–180 are Extracellular-facing; it reads NKWYQYFIGR. A helical transmembrane segment spans residues 181-201; the sequence is IISGLGVGGIAVLSPMLISEV. At 202 to 207 the chain is on the cytoplasmic side; it reads SPKHIR. A helical membrane pass occupies residues 208 to 228; it reads GTLVSCYQLMITLGIFLGYCT. Residues 229-242 lie on the Extracellular side of the membrane; it reads NYGTKTYTNSVQWR. Residues 243 to 263 form a helical membrane-spanning segment; it reads VPLGLGFAWALFMIGGMTFVP. Topologically, residues 264-346 are cytoplasmic; the sequence is ESPRYLVEVG…IQSLQQLTGD (83 aa). The chain crosses the membrane as a helical span at residues 347–363; the sequence is NYFFYYGTTVFTAVGLE. The Extracellular segment spans residues 364–369; it reads DSFETS. The chain crosses the membrane as a helical span at residues 370–387; it reads IVLGIVNFASTFVGIFLV. At 388-394 the chain is on the cytoplasmic side; it reads ERYGRRR. The helical transmembrane segment at 395 to 415 threads the bilayer; sequence CLLWGAASMTACMVVFASVGV. The Extracellular segment spans residues 416–437; the sequence is TRLWPNGKKNGSSKGAGNCMIV. Residue Asn-425 is glycosylated (N-linked (GlcNAc...) asparagine). The helical transmembrane segment at 438–458 threads the bilayer; the sequence is FTCFYLFCFATTWAPIPFVVN. Residues 459–475 are Cytoplasmic-facing; sequence SETFPLRVKSKCMAIAQ. The helical transmembrane segment at 476-496 threads the bilayer; it reads ACNWIWGFLIGFFTPFISGAI. Position 497 (Asp-497) is a topological domain, extracellular. A helical membrane pass occupies residues 498-518; that stretch reads FYYGYVFMGCLVFSYFYVFFF. The Cytoplasmic portion of the chain corresponds to 519-576; it reads VPETKGLTLEEVNTLWEEGVLPWKSPSWVPPNKRGTDYNADDLMHDDQPFYKKMFGKK.

The protein belongs to the major facilitator superfamily. Sugar transporter (TC 2.A.1.1) family.

Its subcellular location is the cell membrane. Xylose uptake is strongly inhibited by glucose. Functionally, low-affinity glucose transporter. Can also transport xylose. This Saccharomyces cerevisiae (strain ATCC 204508 / S288c) (Baker's yeast) protein is Low-affinity glucose transporter HXT4 (HXT4).